A 266-amino-acid chain; its full sequence is Undecaprenyl-diphosphatase (266 aa).

8 helical membrane passes run 1–21 (MMSWLTIGVILGLVQGITEFL), 43–63 (ASVFEVAVQLGSIMAVVVIYW), 81–101 (LYGIWLLFLTTLPPGIIGFLF), 107–127 (TLFTIPSVIAALTTGSIFMLI), 145–165 (LTPKTALGIGFFECLALWPGF), 183–203 (HLAAEYSFIAAVPVMFAATGY), 219–239 (LFITGMICAFLAAWITIKVFI), and 245–265 (ISLRPFAYYRLLLAFIVYLCI).

It belongs to the UppP family.

It localises to the cell membrane. It carries out the reaction di-trans,octa-cis-undecaprenyl diphosphate + H2O = di-trans,octa-cis-undecaprenyl phosphate + phosphate + H(+). Catalyzes the dephosphorylation of undecaprenyl diphosphate (UPP). Confers resistance to bacitracin. The sequence is that of Undecaprenyl-diphosphatase from Lawsonia intracellularis (strain PHE/MN1-00).